Reading from the N-terminus, the 387-residue chain is WD repeat-containing protein 89 (387 aa).

WD repeat units lie at residues 21 to 65 (KEPT…VLRE), 68 to 107 (GYPG…EKPV), 112 to 156 (GYPS…QNLS), 168 to 208 (THSD…EEDA), 214 to 254 (NSIS…TDEP), and 319 to 358 (GHAA…KTFT).

The polypeptide is WD repeat-containing protein 89 (WDR89) (Homo sapiens (Human)).